Reading from the N-terminus, the 596-residue chain is MKIRSPIVSVLGHVDHGKTTLLDYIRGSTIAAKEAGGITQHIGATEIPNDTIENICGDFISKLAIKDLIPGLFFIDTPGHAAFTSLRKRGGALADLAVLILDVNDGFKPQTYEALNILKMYKTPFIVVANKIDRLFGWEVHEGASFRETFSNQAKSVQQDLDNKIYEIVGELHKEGFQSERFDRVSNFASQISIIPISAKTGEGVIEVLAMLLGLAQEYLTEQLEIDENAPAKGTVLEIKEETGLGVTLDAIIYDGVLRTNDEIALMLSSEDVLVTKIRSILRPLPLEEMRDSKKKFRKLDEVVAAAGIKVAAPHLDDVVSGSPLRVLSEDTDVEQEILNEIDNITIDTEDEGILVKADTIGSLEAVVKLLREMDIPIRAADIGDVNRRDIINSSIAYDENELHGAIIAFNVDVHPNSEEDLNNSEVKLFSGDVIYQILEEYEEWVKQKQEDKKKSFYDAIIKPAKFVSLPKLVFRQSKPAIIGIESLSGTLKQGQQLINKDGHVVGSIASMEDKGETLPDISRGQRVAMAIKDAIVGKDFEEGDELYVDIPEKHYKYIEREFKDKLTEDEFETLYEFLEIKRKQDSDWGSFGLFE.

The 218-residue stretch at 3-220 (IRSPIVSVLG…MLLGLAQEYL (218 aa)) folds into the tr-type G domain. The tract at residues 12-19 (GHVDHGKT) is G1. 12 to 19 (GHVDHGKT) contributes to the GTP binding site. A G2 region spans residues 37–41 (GITQH). The segment at 76-79 (DTPG) is G3. GTP contacts are provided by residues 76-80 (DTPGH) and 130-133 (NKID). Residues 130–133 (NKID) form a G4 region. A G5 region spans residues 198 to 200 (SAK).

It belongs to the TRAFAC class translation factor GTPase superfamily. Classic translation factor GTPase family. IF-2 subfamily.

Functionally, function in general translation initiation by promoting the binding of the formylmethionine-tRNA to ribosomes. Seems to function along with eIF-2. The protein is Probable translation initiation factor IF-2 of Methanobrevibacter smithii (strain ATCC 35061 / DSM 861 / OCM 144 / PS).